Reading from the N-terminus, the 235-residue chain is NifU-like protein 2, chloroplastic (235 aa).

A chloroplast-targeting transit peptide spans Met1–Pro16.

It belongs to the NifU family. As to quaternary structure, homodimer; disulfide-linked. Requires [2Fe-2S] cluster as cofactor. In terms of tissue distribution, predominantly expressed in leaves and floral stalks. Ubiquitous (at protein level).

The protein resides in the plastid. It localises to the chloroplast stroma. Molecular scaffold for [Fe-S] cluster assembly of chloroplastic iron-sulfur proteins. Required for biogenesis of ferredoxin, a major photosynthetic electron carrier containing [2Fe-2S] cluster. Required for the assembly of photosystem I complex. This chain is NifU-like protein 2, chloroplastic (NIFU2), found in Arabidopsis thaliana (Mouse-ear cress).